Reading from the N-terminus, the 429-residue chain is Serine--tRNA ligase (429 aa).

236 to 238 (TAE) is an L-serine binding site. 267–269 (RSE) provides a ligand contact to ATP. Residue E290 participates in L-serine binding. An ATP-binding site is contributed by 354 to 357 (EVSS). Residue S390 coordinates L-serine.

This sequence belongs to the class-II aminoacyl-tRNA synthetase family. Type-1 seryl-tRNA synthetase subfamily. Homodimer. The tRNA molecule binds across the dimer.

Its subcellular location is the cytoplasm. The enzyme catalyses tRNA(Ser) + L-serine + ATP = L-seryl-tRNA(Ser) + AMP + diphosphate + H(+). It catalyses the reaction tRNA(Sec) + L-serine + ATP = L-seryl-tRNA(Sec) + AMP + diphosphate + H(+). It participates in aminoacyl-tRNA biosynthesis; selenocysteinyl-tRNA(Sec) biosynthesis; L-seryl-tRNA(Sec) from L-serine and tRNA(Sec): step 1/1. Catalyzes the attachment of serine to tRNA(Ser). Is also able to aminoacylate tRNA(Sec) with serine, to form the misacylated tRNA L-seryl-tRNA(Sec), which will be further converted into selenocysteinyl-tRNA(Sec). The sequence is that of Serine--tRNA ligase from Wigglesworthia glossinidia brevipalpis.